The primary structure comprises 198 residues: Ribosome maturation factor RimP (198 aa).

It belongs to the RimP family.

Its subcellular location is the cytoplasm. Its function is as follows. Required for maturation of 30S ribosomal subunits. This Agrobacterium fabrum (strain C58 / ATCC 33970) (Agrobacterium tumefaciens (strain C58)) protein is Ribosome maturation factor RimP.